Reading from the N-terminus, the 119-residue chain is Insulin growth factor-like family member 2 (119 aa).

The first 25 residues, 1–25 (MVPRIFAPAYVSVCLLLLCPREVIA), serve as a signal peptide directing secretion.

It belongs to the IGFL family. In terms of tissue distribution, detected in cerebellum, heart, placenta, spleen, stomach, testis and thymus.

The protein resides in the secreted. Potential ligand of the IGFLR1 cell membrane receptor. The polypeptide is Insulin growth factor-like family member 2 (IGFL2) (Homo sapiens (Human)).